Consider the following 293-residue polypeptide: 3-hydroxybutyryl-CoA dehydrogenase (293 aa).

The protein belongs to the 3-hydroxyacyl-CoA dehydrogenase family.

It catalyses the reaction (3S)-3-hydroxybutanoyl-CoA + NADP(+) = acetoacetyl-CoA + NADPH + H(+). It functions in the pathway lipid metabolism; butanoate metabolism. This chain is 3-hydroxybutyryl-CoA dehydrogenase (hbdA), found in Bradyrhizobium diazoefficiens (strain JCM 10833 / BCRC 13528 / IAM 13628 / NBRC 14792 / USDA 110).